We begin with the raw amino-acid sequence, 1200 residues long: Zinc finger protein 804A (1200 aa).

The segment at 57–81 (FYCELCDKQYYKHQEFDNHINSYDH) adopts a C2H2-type zinc-finger fold. 6 disordered regions span residues 252–280 (STSH…PEAM), 343–367 (DGPV…RTSA), 582–687 (HWFH…NCGG), 727–777 (EDDG…SDES), 799–828 (QPKK…NYPM), and 874–949 (PYNP…TNPE). The segment covering 585-603 (HKSRRKKKRRKLCRYHPGK) has biased composition (basic residues). Basic and acidic residues predominate over residues 604 to 666 (SSKEPEGSGK…ASTHLGEKET (63 aa)). Composition is skewed to polar residues over residues 667–687 (MNTT…NCGG) and 732–756 (LASQ…SLTN). Residues 800-811 (PKKKRRRKRSRL) are compositionally biased toward basic residues. Residues 891 to 944 (TETTPCDSSQTSNDLATPVNVTRDPSNSTTDNTLLEHNQRSQTTNSNEKQTPFK) are compositionally biased toward polar residues.

The protein is Zinc finger protein 804A (Znf804a) of Mus musculus (Mouse).